The following is a 200-amino-acid chain: Protein GrpE (200 aa).

Positions 1 to 11 are enriched in polar residues; sequence MSNQTNKAQDN. Residues 1–25 are disordered; sequence MSNQTNKAQDNQVEEIVEGELLNEN.

The protein belongs to the GrpE family. In terms of assembly, homodimer.

The protein localises to the cytoplasm. Participates actively in the response to hyperosmotic and heat shock by preventing the aggregation of stress-denatured proteins, in association with DnaK and GrpE. It is the nucleotide exchange factor for DnaK and may function as a thermosensor. Unfolded proteins bind initially to DnaJ; upon interaction with the DnaJ-bound protein, DnaK hydrolyzes its bound ATP, resulting in the formation of a stable complex. GrpE releases ADP from DnaK; ATP binding to DnaK triggers the release of the substrate protein, thus completing the reaction cycle. Several rounds of ATP-dependent interactions between DnaJ, DnaK and GrpE are required for fully efficient folding. This is Protein GrpE from Shewanella pealeana (strain ATCC 700345 / ANG-SQ1).